We begin with the raw amino-acid sequence, 187 residues long: Transmembrane protein 17A (187 aa).

4 helical membrane-spanning segments follow: residues 49-69 (IFLY…VIML), 82-102 (FILV…LYLG), 114-134 (LAGF…FLLC), and 146-166 (AVHG…IFAL).

It belongs to the TMEM17 family. Part of the tectonic-like complex (also named B9 complex).

It is found in the cell projection. The protein localises to the cilium membrane. Transmembrane component of the tectonic-like complex, a complex localized at the transition zone of primary cilia and acting as a barrier that prevents diffusion of transmembrane proteins between the cilia and plasma membranes. Required for ciliogenesis and sonic hedgehog/SHH signaling. This is Transmembrane protein 17A (tmem17-a) from Xenopus tropicalis (Western clawed frog).